We begin with the raw amino-acid sequence, 57 residues long: Large ribosomal subunit protein bL32 (57 aa).

Positions 1-23 (MAVPKKKTSKSKRDKRRATWRHK) are disordered.

Belongs to the bacterial ribosomal protein bL32 family.

This Trichormus variabilis (strain ATCC 29413 / PCC 7937) (Anabaena variabilis) protein is Large ribosomal subunit protein bL32.